A 340-amino-acid chain; its full sequence is Anthranilate phosphoribosyltransferase (340 aa).

Residues Gly83, Gly86 to Asp87, Thr91, Asn93 to Thr96, Lys111 to Ser119, and Ser123 each bind 5-phospho-alpha-D-ribose 1-diphosphate. Position 83 (Gly83) interacts with anthranilate. Ser95 provides a ligand contact to Mg(2+). Asn114 provides a ligand contact to anthranilate. An anthranilate-binding site is contributed by Arg169. The Mg(2+) site is built by Asp228 and Glu229.

This sequence belongs to the anthranilate phosphoribosyltransferase family. As to quaternary structure, homodimer. Mg(2+) is required as a cofactor.

The catalysed reaction is N-(5-phospho-beta-D-ribosyl)anthranilate + diphosphate = 5-phospho-alpha-D-ribose 1-diphosphate + anthranilate. The protein operates within amino-acid biosynthesis; L-tryptophan biosynthesis; L-tryptophan from chorismate: step 2/5. In terms of biological role, catalyzes the transfer of the phosphoribosyl group of 5-phosphorylribose-1-pyrophosphate (PRPP) to anthranilate to yield N-(5'-phosphoribosyl)-anthranilate (PRA). The chain is Anthranilate phosphoribosyltransferase from Solibacter usitatus (strain Ellin6076).